The sequence spans 106 residues: Late cornified envelope protein 2A (106 aa).

A compositionally biased stretch (low complexity) spans 1–10 (MSCQQNQQQC). The disordered stretch occupies residues 1–25 (MSCQQNQQQCQPPPKCPPKCPPKCP). A compositionally biased stretch (pro residues) spans 11 to 25 (QPPPKCPPKCPPKCP).

It belongs to the LCE family. Interacts with CYSRT1. In terms of tissue distribution, skin-specific. Expression was readily detected in adult trunk skin, adult arm skin, fetal skin, penal skin, vulva, esophagus and tongue. Not expressed in the cervix, rectum, lung, colon, or placenta.

Its function is as follows. Precursors of the cornified envelope of the stratum corneum. This is Late cornified envelope protein 2A (LCE2A) from Homo sapiens (Human).